Here is a 119-residue protein sequence, read N- to C-terminus: Large ribosomal subunit protein bL20 (119 aa).

It belongs to the bacterial ribosomal protein bL20 family.

Its function is as follows. Binds directly to 23S ribosomal RNA and is necessary for the in vitro assembly process of the 50S ribosomal subunit. It is not involved in the protein synthesizing functions of that subunit. The polypeptide is Large ribosomal subunit protein bL20 (Cellvibrio japonicus (strain Ueda107) (Pseudomonas fluorescens subsp. cellulosa)).